Here is a 504-residue protein sequence, read N- to C-terminus: Anaerobic nitric oxide reductase transcription regulator NorR (504 aa).

Asp57 is subject to 4-aspartylphosphate. In terms of domain architecture, Sigma-54 factor interaction spans 187 to 416 (MIGLSPGMTQ…LEHAIHRAVV (230 aa)). Residues 215-222 (GETGTGKE) and 278-287 (ADNGTLFLDE) contribute to the ATP site. A DNA-binding region (H-T-H motif) is located at residues 479-498 (WAACARMLETDVANLHRLAK).

The protein operates within nitrogen metabolism; nitric oxide reduction. In terms of biological role, required for the expression of anaerobic nitric oxide (NO) reductase, acts as a transcriptional activator for at least the norVW operon. Activation also requires sigma-54. This is Anaerobic nitric oxide reductase transcription regulator NorR from Escherichia coli (strain K12 / MC4100 / BW2952).